A 201-amino-acid polypeptide reads, in one-letter code: MLKEVRPAVVSLLALTMITGLAYPLAVTGLATVLFPYQAQGSLVERGGKVVGSALIGQEFKGDEYFHGRPSATVAPDPADSSKTVSAPYNAANSGGSNLGPTSKALADRLSEDVAKLKAENPAAPIPVDLVTTSGSGLDPDISPEGALFQVPRVAKARGVTEEQIRKLVGASIEQPLGGVLGESRVNVLKLNLALDAAAPR.

Residues 12 to 34 traverse the membrane as a helical segment; that stretch reads LLALTMITGLAYPLAVTGLATVL. The interval 69–102 is disordered; sequence RPSATVAPDPADSSKTVSAPYNAANSGGSNLGPT. Over residues 81–101 the composition is skewed to polar residues; it reads SSKTVSAPYNAANSGGSNLGP.

Belongs to the KdpC family. The system is composed of three essential subunits: KdpA, KdpB and KdpC.

The protein resides in the cell inner membrane. Its function is as follows. Part of the high-affinity ATP-driven potassium transport (or Kdp) system, which catalyzes the hydrolysis of ATP coupled with the electrogenic transport of potassium into the cytoplasm. This subunit acts as a catalytic chaperone that increases the ATP-binding affinity of the ATP-hydrolyzing subunit KdpB by the formation of a transient KdpB/KdpC/ATP ternary complex. This Rhodopseudomonas palustris (strain TIE-1) protein is Potassium-transporting ATPase KdpC subunit.